The sequence spans 150 residues: Histone H3-like centromeric protein A (150 aa).

The disordered stretch occupies residues 1–55; sequence MRPGSTPPSRRKSRPPRRVSPPLPTTSRTSPRRPHAQQQRRASRASPKKRFRPGT. Basic residues predominate over residues 41 to 53; sequence RASRASPKKRFRP. The interval 53-150 is H3-like; the sequence is PGTRALMEIR…RIRGVNEGLG (98 aa).

It belongs to the histone H3 family. In terms of assembly, component of centromeric nucleosomes, where DNA is wrapped around a histone octamer core. The octamer contains two molecules each of H2A, H2B, CENPA and H4 assembled in one CENPA-H4 heterotetramer and two H2A-H2B heterodimers. CENPA modulates the DNA-binding characteristics of nucleosomes so that protruding DNA ends have higher flexibility than in nucleosomes containing conventional histone H3.

It is found in the nucleus. Its subcellular location is the chromosome. It localises to the centromere. Its function is as follows. Histone H3-like nucleosomal protein that is specifically found in centromeric nucleosomes. Replaces conventional H3 in the nucleosome core of centromeric chromatin that serves as an assembly site for the inner kinetochore. The presence of CENPA subtly modifies the nucleosome structure and the way DNA is wrapped around the nucleosome and gives rise to protruding DNA ends that are less well-ordered and rigid compared to nucleosomes containing histone H3. May serve as an epigenetic mark that propagates centromere identity through replication and cell division. Required for recruitment and assembly of kinetochore proteins, and as a consequence required for progress through mitosis, chromosome segregation and cytokinesis. The sequence is that of Histone H3-like centromeric protein A (cenpa) from Xenopus laevis (African clawed frog).